We begin with the raw amino-acid sequence, 159 residues long: Insulin-like peptide 7 (159 aa).

Residues 1–31 (MTRMIIQNSGSWTLCGAVLLFVLPLIPTPEA) form the signal peptide. Disulfide bonds link C63-C136, C75-C150, and C135-C141. Residues 90 to 121 (TGNDEAWIKKTTTEPDGSTWLHVNYANMFLRS) constitute a propeptide, connecting peptide.

It belongs to the insulin family. Heterodimer of a B chain and an A chain linked by two disulfide bonds. Broadly expressed at a low level throughout the embryo, except the yolk. Expressed at a moderate level in the embryonic midgut. Larval expression is restricted to ten cells of the ventral nerve cord - in four pairs of centrally located cells in the most posterior abdominal segments and in one pair of dorsally located cells in the A1 or A2 segments.

The protein localises to the secreted. Its function is as follows. Possible ligand of InR/insulin-like receptor. The protein is Insulin-like peptide 7 of Drosophila melanogaster (Fruit fly).